The following is a 155-amino-acid chain: Ribosome maturation factor RimP (155 aa).

Belongs to the RimP family.

Its subcellular location is the cytoplasm. In terms of biological role, required for maturation of 30S ribosomal subunits. In Bacteroides thetaiotaomicron (strain ATCC 29148 / DSM 2079 / JCM 5827 / CCUG 10774 / NCTC 10582 / VPI-5482 / E50), this protein is Ribosome maturation factor RimP.